We begin with the raw amino-acid sequence, 872 residues long: Alanine--tRNA ligase (872 aa).

Zn(2+) contacts are provided by H567, H571, C669, and H673.

The protein belongs to the class-II aminoacyl-tRNA synthetase family. It depends on Zn(2+) as a cofactor.

The protein resides in the cytoplasm. The enzyme catalyses tRNA(Ala) + L-alanine + ATP = L-alanyl-tRNA(Ala) + AMP + diphosphate. Catalyzes the attachment of alanine to tRNA(Ala) in a two-step reaction: alanine is first activated by ATP to form Ala-AMP and then transferred to the acceptor end of tRNA(Ala). Also edits incorrectly charged Ser-tRNA(Ala) and Gly-tRNA(Ala) via its editing domain. This is Alanine--tRNA ligase from Streptococcus pyogenes serotype M5 (strain Manfredo).